We begin with the raw amino-acid sequence, 261 residues long: Ribosomal RNA small subunit methyltransferase J (261 aa).

S-adenosyl-L-methionine contacts are provided by residues 109 to 110 (RD), 125 to 126 (ER), and aspartate 179.

It belongs to the methyltransferase superfamily. RsmJ family.

The protein resides in the cytoplasm. The catalysed reaction is guanosine(1516) in 16S rRNA + S-adenosyl-L-methionine = N(2)-methylguanosine(1516) in 16S rRNA + S-adenosyl-L-homocysteine + H(+). Functionally, specifically methylates the guanosine in position 1516 of 16S rRNA. The polypeptide is Ribosomal RNA small subunit methyltransferase J (Pseudomonas aeruginosa (strain LESB58)).